A 296-amino-acid chain; its full sequence is Ribosomal RNA small subunit methyltransferase H (296 aa).

S-adenosyl-L-methionine-binding positions include 30-32, Asp49, Phe77, Asp95, and Gln102; that span reads GGH.

It belongs to the methyltransferase superfamily. RsmH family.

It localises to the cytoplasm. It carries out the reaction cytidine(1402) in 16S rRNA + S-adenosyl-L-methionine = N(4)-methylcytidine(1402) in 16S rRNA + S-adenosyl-L-homocysteine + H(+). Its function is as follows. Specifically methylates the N4 position of cytidine in position 1402 (C1402) of 16S rRNA. In Hydrogenobaculum sp. (strain Y04AAS1), this protein is Ribosomal RNA small subunit methyltransferase H.